Consider the following 339-residue polypeptide: MAQLGAVVAVASSFFCASLFSAVHKIEEGHIGVYYRGGALLTSTSGPGFHLMLPFITSYKSVQTTLQTDEVKNVPCGTSGGVMIYFDRIEVVNFLVPHAVYDIVKNYTADYDKALIFNKIHHELNQFCSVHTLQEVYIELFDQIDENLKLALQQDLTSMAPGLVIQAVRVTKPNIPEAIRRNYELMESEKTKLLIAAQKQKVVEKEAETERKKALIEAEKVAQVAEITYGQKVMEKETEKKISEIEDAAFLAREKAKADAECYTALKIAEANKLKLTPEYLQLMKYKAIASNSKIYFGKDIPNMFMDSAGGLGKQSEGLSDKLGFGLEDEPLETATKDN.

At 1–3 (MAQ) the chain is on the cytoplasmic side. The chain crosses the membrane as a helical span at residues 4–24 (LGAVVAVASSFFCASLFSAVH). Over 25–339 (KIEEGHIGVY…EPLETATKDN (315 aa)) the chain is Extracellular. An N-linked (GlcNAc...) asparagine glycan is attached at Asn-106. Residues 177 to 309 (EAIRRNYELM…DIPNMFMDSA (133 aa)) are interaction with ERLIN1. Residue Lys-267 is modified to N6-acetyllysine.

The protein belongs to the band 7/mec-2 family. As to quaternary structure, forms a heteromeric complex with ERLIN1. In complex with ERLIN1, interacts with RNF170. Interacts with activated ITPR1, independently of the degree of ITPR1 polyubiquitination. Interacts with SCAP, INSIG1, SREBF1 and SREBF2 under cholesterol sufficiency conditions; indicative for an association with the SCAP-SREBP-INSIG complex. Probably part of an AMFR/gp78 and INSIG1-containing ubiquitin ligase complex involved in ERAD of HMGCR. Interacts with TMUB1; TMUB1 bridges the association with AMFR. Interacts with SYVN1 and RNF139. Interacts with TMEM259. Interacts with TMEM41B. Post-translationally, deubiquitinated by USP25; leading to stabilization.

Its subcellular location is the endoplasmic reticulum membrane. Functionally, component of the ERLIN1/ERLIN2 complex which mediates the endoplasmic reticulum-associated degradation (ERAD) of inositol 1,4,5-trisphosphate receptors (IP3Rs) such as ITPR1. Promotes sterol-accelerated ERAD of HMGCR probably implicating an AMFR/gp78-containing ubiquitin ligase complex. Involved in regulation of cellular cholesterol homeostasis by regulation the SREBP signaling pathway. May promote ER retention of the SCAP-SREBF complex. The polypeptide is Erlin-2 (Rattus norvegicus (Rat)).